Reading from the N-terminus, the 426-residue chain is Gamma-glutamyl phosphate reductase (426 aa).

The protein belongs to the gamma-glutamyl phosphate reductase family.

The protein localises to the cytoplasm. It catalyses the reaction L-glutamate 5-semialdehyde + phosphate + NADP(+) = L-glutamyl 5-phosphate + NADPH + H(+). It participates in amino-acid biosynthesis; L-proline biosynthesis; L-glutamate 5-semialdehyde from L-glutamate: step 2/2. In terms of biological role, catalyzes the NADPH-dependent reduction of L-glutamate 5-phosphate into L-glutamate 5-semialdehyde and phosphate. The product spontaneously undergoes cyclization to form 1-pyrroline-5-carboxylate. The protein is Gamma-glutamyl phosphate reductase of Ralstonia pickettii (strain 12J).